The chain runs to 160 residues: Cytochrome b6-f complex subunit 4 (160 aa).

3 consecutive transmembrane segments (helical) span residues 36–56, 95–115, and 131–151; these read LLYI…GLAV, LLGV…PFLE, and TVFL…TLPI.

Belongs to the cytochrome b family. PetD subfamily. As to quaternary structure, the 4 large subunits of the cytochrome b6-f complex are cytochrome b6, subunit IV (17 kDa polypeptide, petD), cytochrome f and the Rieske protein, while the 4 small subunits are petG, petL, petM and petN. The complex functions as a dimer.

The protein localises to the plastid. It is found in the chloroplast thylakoid membrane. Functionally, component of the cytochrome b6-f complex, which mediates electron transfer between photosystem II (PSII) and photosystem I (PSI), cyclic electron flow around PSI, and state transitions. This is Cytochrome b6-f complex subunit 4 from Amborella trichopoda.